A 213-amino-acid chain; its full sequence is Pyridoxine/pyridoxamine 5'-phosphate oxidase (213 aa).

Substrate contacts are provided by residues 10–13 and K68; that span reads REEY. FMN-binding positions include 63–68, 78–79, K85, and Q107; these read RMLLLK and FT. Substrate-binding residues include Y125, R129, and S133. FMN is bound by residues 142-143 and W186; that span reads QS. 192–194 serves as a coordination point for substrate; the sequence is RLH. R196 serves as a coordination point for FMN.

The protein belongs to the pyridoxamine 5'-phosphate oxidase family. As to quaternary structure, homodimer. It depends on FMN as a cofactor.

The enzyme catalyses pyridoxamine 5'-phosphate + O2 + H2O = pyridoxal 5'-phosphate + H2O2 + NH4(+). It carries out the reaction pyridoxine 5'-phosphate + O2 = pyridoxal 5'-phosphate + H2O2. It functions in the pathway cofactor metabolism; pyridoxal 5'-phosphate salvage; pyridoxal 5'-phosphate from pyridoxamine 5'-phosphate: step 1/1. The protein operates within cofactor metabolism; pyridoxal 5'-phosphate salvage; pyridoxal 5'-phosphate from pyridoxine 5'-phosphate: step 1/1. Functionally, catalyzes the oxidation of either pyridoxine 5'-phosphate (PNP) or pyridoxamine 5'-phosphate (PMP) into pyridoxal 5'-phosphate (PLP). This is Pyridoxine/pyridoxamine 5'-phosphate oxidase from Nocardioides sp. (strain ATCC BAA-499 / JS614).